Reading from the N-terminus, the 551-residue chain is Alkaline/neutral invertase CINV1 (551 aa).

Met-1 is subject to N-acetylmethionine. 4 positions are modified to phosphoserine: Ser-11, Ser-14, Ser-44, and Ser-61. Residues 50 to 74 (TGYSRHDGIHDSPRGRSVLDTPLSS) are disordered. Basic and acidic residues predominate over residues 53 to 63 (SRHDGIHDSPR). At Thr-70 the chain carries Phosphothreonine. Ser-547 is subject to Phosphoserine.

This sequence belongs to the glycosyl hydrolase 100 family. As to quaternary structure, forms homohexamers. Interacts with PIP5K9. Interaction with PIP5K9 represses CINV1 activity. Interacts with GRF1, GRF2, GRF3, GRF4, GRF5, GRF6, GRF7, GRF8 and GRF10; these interactions are dependent of the phosphorylation at Ser-547. In terms of processing, phosphorylated at Ser-547 by CPK3 and CPK21. Expressed in radicle, hypocotyls, root tips and vascular cylinder, leaf vasculature, shoot stipules, trichomes, stem, stigma apex and base of siliques.

It is found in the cytoplasm. It localises to the cytosol. Its subcellular location is the nucleus. The catalysed reaction is Hydrolysis of terminal non-reducing beta-D-fructofuranoside residues in beta-D-fructofuranosides.. Its function is as follows. Cytosolic invertase that specifically cleaves sucrose into glucose and fructose and is involved in the regulation of multiple tissue development including primary root elongation, root hair growth, leaf and silique development, and floral transition. Is involved in osmotic stress-induced inhibition on lateral root growth by controlling the concentration of hexose in cells. May regulate sugar-mediated root development by controlling sucrose catabolism in root cells. Contributes to carbon partitioning and cellulose biosynthesis in seedlings. This Arabidopsis thaliana (Mouse-ear cress) protein is Alkaline/neutral invertase CINV1.